The following is a 788-amino-acid chain: MSSHTVSTSLAVATLGTPRIGPRRELKSALESFWAGKSTEADLLKVAAALRAANWARQSARGVSVIPSNDFSLYDQVLDTSVMVGAIPEIYGWRGGPVSLATYFAMARGTQAEIAGHGCANGHHHGDSTPQGVPAQEMTKWFDTNYHYMVPEFSAGQSFQLASVKPLEEYREAKALGYDTRPVLLGPVTYLKLGKSADAGLDVLSLLPKLVPVYIEILGRLAAAGAKWVQLDEPALVLDLDDRERLAFRDAYGQIARELPHLDIMLTTYFGGLGDNLDTALALPIAGLHLDLVRAPKQINAVIAKGPKDLVLSLGVVDGRNIWRADLPDLLDRVEPIVQQRGAERVQLAPSCSLLHVPVDLELETGLDPDLKSWLSFSLQKMGELSTLSRALSGDRAAVQDQLSASAKAAATRRKSPKVHDMAVSSRAAAVTPAMTQRNSGFAARATLQHQRLQLPAFPTTTIGSFPQTAQIRQARAAHAKGAISDADYNTFLRGETARAIQWQEKVGLDVLVHGEFERNDMVQYFGEQLSGFAFTKEGWVQSYGSRCVRPPILFGDVSRPKPMTVGWWKYAQSLTGRPMKGMLTGPVTILNWSFVRDDVPRSTACLQIALAIRDEVGDLEQAGATMIQIDEAALREGLPLRRSEWKGYLDWAVECFRLCSSGVKDETQIHTHMCYSEFNDIIDAIAAMDADVISIETSRSKMELLDAFKTYKYPNEIGPGVYDIHSPRVPSVEEMTTLLQLARQRLSDGQLWVNPDCGLKTRGWDEVQGALVNMVEAARQIRQVSAG.

Residues 24–27 (RELK) and K140 contribute to the 5-methyltetrahydropteroyltri-L-glutamate site. L-homocysteine is bound by residues 463 to 465 (IGS) and E516. L-methionine contacts are provided by residues 463 to 465 (IGS) and E516. 5-methyltetrahydropteroyltri-L-glutamate-binding positions include 547-548 (RC) and W593. D631 provides a ligand contact to L-homocysteine. Position 631 (D631) interacts with L-methionine. A 5-methyltetrahydropteroyltri-L-glutamate-binding site is contributed by E637. Zn(2+)-binding residues include H673, C675, and E697. The active-site Proton donor is H726. C758 serves as a coordination point for Zn(2+).

Belongs to the vitamin-B12 independent methionine synthase family. Zn(2+) is required as a cofactor.

It catalyses the reaction 5-methyltetrahydropteroyltri-L-glutamate + L-homocysteine = tetrahydropteroyltri-L-glutamate + L-methionine. The protein operates within amino-acid biosynthesis; L-methionine biosynthesis via de novo pathway; L-methionine from L-homocysteine (MetE route): step 1/1. Its function is as follows. Catalyzes the transfer of a methyl group from 5-methyltetrahydrofolate to homocysteine resulting in methionine formation. The chain is 5-methyltetrahydropteroyltriglutamate--homocysteine methyltransferase from Rhodopseudomonas palustris (strain ATCC BAA-98 / CGA009).